Reading from the N-terminus, the 276-residue chain is Malonyl-[acyl-carrier protein] O-methyltransferase (276 aa).

It belongs to the methyltransferase superfamily.

It carries out the reaction malonyl-[ACP] + S-adenosyl-L-methionine = malonyl-[ACP] methyl ester + S-adenosyl-L-homocysteine. Its pathway is cofactor biosynthesis; biotin biosynthesis. Converts the free carboxyl group of a malonyl-thioester to its methyl ester by transfer of a methyl group from S-adenosyl-L-methionine (SAM). It allows to synthesize pimeloyl-ACP via the fatty acid synthetic pathway. The sequence is that of Malonyl-[acyl-carrier protein] O-methyltransferase from Paenibacillus sp. (strain JDR-2).